A 549-amino-acid chain; its full sequence is MDVVEVAGSWWAQEREDIIMKYEKGHRAGLPEDKGPKPFRSYNNNVDHLGIVHETELPPLTAREAKQIRREISRKSKWVDMLGDWEKYKSSRKLIDRAYKGMPMNIRGPMWSVLLNIEEMKLKNPGRYQIMKEKGKRSSEHIQRIDRDISGTLRKHMFFRDRYGTKQRELLHILLAYEEYNPEVGYCRDLSHIAALFLLYLPEEDAFWALVQLLASERHSLQGFHSPNGGTVQGLQDQQEHVVATSQPKTMGHQDKKDLCGQCSPLGCLIRILIDGISLGLTLRLWDVYLVEGEQALMPITRIAFKVQQKRLTKTSRCGPWARFCNRFVDTWARDEDTVLKHLRASMKKLTRKQGDLPPPAKPEQGSSASRPVPASRGGKTLCKGDRQAPPGPPARFPRPIWSASPPRAPRSSTPCPGGAVREDTYPVGTQGVPSPALAQGGPQGSWRFLQWNSMPRLPTDLDVEGPWFRHYDFRQSCWVRAISQEDQLAPCWQAEHPAERVRSAFAAPSTDSDQGTPFRARDEQQCAPTSGPCLCGLHLESSQFPPGF.

The Rab-GAP TBC domain maps to 101–293 (GMPMNIRGPM…RLWDVYLVEG (193 aa)). 2 S-palmitoyl cysteine lipidation sites follow: cysteine 318 and cysteine 325. 2 disordered regions span residues 350–443 (LTRK…QGGP) and 507–526 (AAPS…DEQQ). The span at 398–417 (PRPIWSASPPRAPRSSTPCP) shows a compositional bias: low complexity.

Post-translationally, ubiquitinated by a CUL7-based E3 ligase, which leads to proteasomal degradation. Palmitoylation is required for membrane localization and protects TBC1D3 from ubiquitination.

The protein localises to the cell membrane. Functionally, acts as a GTPase activating protein for RAB5. Does not act on RAB4 or RAB11. The polypeptide is TBC1 domain family member 3G (TBC1D3G) (Homo sapiens (Human)).